Reading from the N-terminus, the 459-residue chain is Cyclooctatin synthase (459 aa).

Cys408 contacts heme.

The protein belongs to the cytochrome P450 family. Heme is required as a cofactor.

The enzyme catalyses cyclooctat-9-ene-5,7-diol + AH2 + O2 = cyclooctatin + A + H2O. Functionally, involved in the biosynthesis of cyclooctatin, a potent inhibitor of lysophospholipase. Catalyzes the hydroxylation of cyclooctat-9-ene-5,7-diol at C-18 to yield the final product, cyclooctatin. The protein is Cyclooctatin synthase of Streptomyces melanosporofaciens.